The primary structure comprises 83 residues: Small ribosomal subunit protein bS21 (83 aa).

Residues 40–83 (TPMDERRRKARSASKRNKVKWRYSNKSEETASETAETPASAPEA) form a disordered region. A compositionally biased stretch (basic residues) spans 47–62 (RKARSASKRNKVKWRY). Residues 71-83 (SETAETPASAPEA) are compositionally biased toward low complexity.

This sequence belongs to the bacterial ribosomal protein bS21 family.

The protein is Small ribosomal subunit protein bS21 of Akkermansia muciniphila (strain ATCC BAA-835 / DSM 22959 / JCM 33894 / BCRC 81048 / CCUG 64013 / CIP 107961 / Muc).